The primary structure comprises 221 residues: Translation initiation factor 6 (221 aa).

Belongs to the eIF-6 family.

Its function is as follows. Binds to the 50S ribosomal subunit and prevents its association with the 30S ribosomal subunit to form the 70S initiation complex. The sequence is that of Translation initiation factor 6 from Methanosphaerula palustris (strain ATCC BAA-1556 / DSM 19958 / E1-9c).